Consider the following 422-residue polypeptide: GTPase Obg (422 aa).

The Obg domain maps to 1–158; sequence MFYDRARIFV…RWLDLELKLL (158 aa). The OBG-type G domain occupies 159-329; sequence ADVGLVGFPN…LVYRVSALLE (171 aa). GTP contacts are provided by residues 165-172, 190-194, 212-215, 282-285, and 310-312; these read GFPNAGKS, FTTIT, DIPG, NKMD, and SAV. The Mg(2+) site is built by Ser172 and Thr192. Residues 337–422 enclose the OCT domain; the sequence is VPEALERPVI…IGDYEFEYVE (86 aa).

It belongs to the TRAFAC class OBG-HflX-like GTPase superfamily. OBG GTPase family. Monomer. It depends on Mg(2+) as a cofactor.

It localises to the cytoplasm. Functionally, an essential GTPase which binds GTP, GDP and possibly (p)ppGpp with moderate affinity, with high nucleotide exchange rates and a fairly low GTP hydrolysis rate. Plays a role in control of the cell cycle, stress response, ribosome biogenesis and in those bacteria that undergo differentiation, in morphogenesis control. In Pelotomaculum thermopropionicum (strain DSM 13744 / JCM 10971 / SI), this protein is GTPase Obg.